Here is a 2116-residue protein sequence, read N- to C-terminus: Myosin-2 heavy chain (2116 aa).

The region spanning 30-82 (SDKRYIWYNPDPKERDSYECGEIVSETSDSFTFKTVDGQDRQVKKDDANQRNP) is the Myosin N-terminal SH3-like domain. Residues 86-759 (DGVEDMSELS…QLARIEEARE (674 aa)) enclose the Myosin motor domain. N6,N6-dimethyllysine is present on Lys130. 179-186 (GESGAGKT) contacts ATP. Actin-binding stretches follow at residues 638–660 (LASL…IPNN) and 738–752 (RFGI…GQLA). Residues 762 to 791 (ISEIIKAIQAATRGWIARKVYKQAREHTVA) enclose the IQ domain. Positions 817 to 2116 (ARPLLKRRNF…MADFFGGFKA (1300 aa)) form a coiled coil. Disordered regions lie at residues 1295 to 1314 (VNEQ…KRKV), 1363 to 1399 (DKSV…SKKK), 1415 to 1444 (TAKK…DAKN), 1711 to 1731 (VRDQ…SKRR), 1771 to 1791 (LEDE…LESE), and 1805 to 1844 (NRSR…AAKL). 3 stretches are compositionally biased toward basic and acidic residues: residues 1375 to 1399 (KNEE…SKKK), 1415 to 1443 (TAKK…DDAK), and 1722 to 1731 (RSELEDSKRR). Residues 1805 to 1832 (NRSRAEKDRKKYEKDLKDTKYKLNDEAA) show a composition bias toward basic and acidic residues. Residues Thr1823, Thr1833, and Thr2029 each carry the phosphothreonine; by MHCK modification.

The protein belongs to the TRAFAC class myosin-kinesin ATPase superfamily. Myosin family. As to quaternary structure, myosin-2 heavy chain is two-headed. It self-assembles into filaments. Hexamer of 2 heavy chain subunits (MHC), 2 alkali light chain subunits (MLC) and 2 regulatory light chain subunits (MLC-2). Associates with elmoA. In terms of processing, phosphorylation inhibits thick filament formation and reduces the actin-activated ATPase activity.

Its subcellular location is the cytoplasm. The protein resides in the cell cortex. Functionally, myosin is a protein that binds to actin and has ATPase activity that is activated by actin. The protein is Myosin-2 heavy chain (mhcA) of Dictyostelium discoideum (Social amoeba).